Consider the following 50-residue polypeptide: Apoptotic protease-activating factor 1 (50 aa).

A CARD domain is found at 1 to 31 (ILKKDNYSYISFYNALIHEGYKDLAALLHSG). One can recognise an NB-ARC domain in the interval 46 to 50 (GGITS).

Monomer. Oligomerizes to a heptameric ring, known as the apoptosome, upon binding of cytochrome c and dATP. Oligomeric Apaf-1 and pro-caspase-9 bind to each other via their respective NH2-terminal CARD domains and consecutively mature caspase-9 is released from the complex. Interacts with APIP. Interacts (via CARD and NACHT domains) with NAIP/BIRC1 (via NACHT domain). Interacts with CIAO2A.

Functionally, oligomeric Apaf-1 mediates the cytochrome c-dependent autocatalytic activation of pro-caspase 9 (Apaf-3), leading to the activation of caspase-3 and apoptosis. This activation requires ATP. The sequence is that of Apoptotic protease-activating factor 1 (APAF1) from Canis lupus familiaris (Dog).